The chain runs to 266 residues: Large ribosomal subunit protein eL8 (266 aa).

Glycyl lysine isopeptide (Lys-Gly) (interchain with G-Cter in SUMO2) cross-links involve residues K11, K20, and K21. K34 carries the post-translational modification N6-acetyllysine. A Glycyl lysine isopeptide (Lys-Gly) (interchain with G-Cter in SUMO2) cross-link involves residue K48. Position 97 is an N6-acetyllysine; alternate (K97). K97 is covalently cross-linked (Glycyl lysine isopeptide (Lys-Gly) (interchain with G-Cter in SUMO2); alternate). A Glycyl lysine isopeptide (Lys-Gly) (interchain with G-Cter in SUMO2) cross-link involves residue K125. K217 carries the N6-acetyllysine modification. Residue K245 forms a Glycyl lysine isopeptide (Lys-Gly) (interchain with G-Cter in SUMO2) linkage.

It belongs to the eukaryotic ribosomal protein eL8 family. Component of the large ribosomal subunit. Interacts with CRY1. Interacts with DICER1, AGO2, TARBP2, MOV10 and EIF6; they form a large RNA-induced silencing complex (RISC).

Its subcellular location is the cytoplasm. In terms of biological role, component of the large ribosomal subunit. The ribosome is a large ribonucleoprotein complex responsible for the synthesis of proteins in the cell. The polypeptide is Large ribosomal subunit protein eL8 (Rpl7a) (Mus musculus (Mouse)).